Consider the following 511-residue polypeptide: 2,3-bisphosphoglycerate-independent phosphoglycerate mutase (511 aa).

Residues D18 and S68 each contribute to the Mn(2+) site. The active-site Phosphoserine intermediate is S68. Residues H129, 159-160 (RD), R191, K197, 261-264 (RSDR), and K329 contribute to the substrate site. Mn(2+) is bound by residues D396, H400, D437, H438, and H459. The tract at residues 442 to 464 (ERMTKQAPDGSVRPYGGHTTNPV) is disordered.

This sequence belongs to the BPG-independent phosphoglycerate mutase family. As to quaternary structure, monomer. It depends on Mn(2+) as a cofactor.

The enzyme catalyses (2R)-2-phosphoglycerate = (2R)-3-phosphoglycerate. It functions in the pathway carbohydrate degradation; glycolysis; pyruvate from D-glyceraldehyde 3-phosphate: step 3/5. Functionally, catalyzes the interconversion of 2-phosphoglycerate and 3-phosphoglycerate. The polypeptide is 2,3-bisphosphoglycerate-independent phosphoglycerate mutase (Streptomyces coelicolor (strain ATCC BAA-471 / A3(2) / M145)).